Reading from the N-terminus, the 410-residue chain is Formyl-CoA:oxalate CoA-transferase (410 aa).

Residues 18–19 (QS), 72–75 (LNTK), 96–98 (NFG), Arg-104, and 136–139 (KAYE) contribute to the CoA site. Residue Asp-168 is the Nucleophile of the active site. Residues 221–245 (PLAEYPNEDFGDEVPRSGNASGGGQ) form a disordered region. 243–245 (GGQ) provides a ligand contact to substrate.

The protein belongs to the CoA-transferase III family. Frc subfamily. Homodimer.

The enzyme catalyses formyl-CoA + oxalate = oxalyl-CoA + formate. It functions in the pathway metabolic intermediate degradation; oxalate degradation; CO(2) and formate from oxalate: step 1/2. In terms of biological role, involved in the catabolism of oxalate and in the adapatation to low pH via the induction of the oxalate-dependent acid tolerance response (ATR). Catalyzes the transfer of the CoA moiety from formyl-CoA to oxalate. The protein is Formyl-CoA:oxalate CoA-transferase of Streptomyces coelicolor (strain ATCC BAA-471 / A3(2) / M145).